A 279-amino-acid polypeptide reads, in one-letter code: 4-diphosphocytidyl-2-C-methyl-D-erythritol kinase (279 aa).

Lys-11 is a catalytic residue. Residue 95-105 (PVAAGLGGGSS) participates in ATP binding. Asp-137 is an active-site residue.

It belongs to the GHMP kinase family. IspE subfamily.

It carries out the reaction 4-CDP-2-C-methyl-D-erythritol + ATP = 4-CDP-2-C-methyl-D-erythritol 2-phosphate + ADP + H(+). It functions in the pathway isoprenoid biosynthesis; isopentenyl diphosphate biosynthesis via DXP pathway; isopentenyl diphosphate from 1-deoxy-D-xylulose 5-phosphate: step 3/6. Its function is as follows. Catalyzes the phosphorylation of the position 2 hydroxy group of 4-diphosphocytidyl-2C-methyl-D-erythritol. The sequence is that of 4-diphosphocytidyl-2-C-methyl-D-erythritol kinase from Geobacter sulfurreducens (strain ATCC 51573 / DSM 12127 / PCA).